The sequence spans 837 residues: Tuftelin-interacting protein 11 (837 aa).

The segment covering 1–13 (MSLSHLYRDGEGH) has biased composition (basic and acidic residues). 3 disordered regions span residues 1–31 (MSLS…DWDL), 54–73 (WAER…RARD), and 85–133 (LKKG…KGFA). A required for interaction with DHX15 region spans residues 1 to 50 (MSLSHLYRDGEGHMDDDDDERENFEITDWDLQNEFNPNRQRHWQTKEEAT). At S2 the chain carries Phosphoserine. Positions 14–28 (MDDDDDERENFEITD) are enriched in acidic residues. Residues 54–64 (WAERDSDEERP) are compositionally biased toward basic and acidic residues. A phosphoserine mark is found at S59 and S98. A compositionally biased stretch (acidic residues) spans 91 to 102 (EEAELEDSEDEE). A compositionally biased stretch (basic and acidic residues) spans 103-116 (KPVKQDDFPKDFGP). A Phosphoserine modification is found at S144. A G-patch domain is found at 149 to 195 (TKGIGQKLLQKMGYVPGRGLGKNAQGIINPIEAKQRKGKGAVGAYGS). Disordered stretches follow at residues 183–236 (QRKG…KKKP) and 289–312 (HNVP…EAKA). S210 is modified (phosphoserine). The segment covering 217–231 (EFQKELSQWRKDPSG) has biased composition (basic and acidic residues). Positions 700–705 (VKDKFN) match the Nuclear localization signal motif. Residues 710–734 (IMNRAVSSNVGAYMQPGARENIAYL) are required for nuclear speckle localization.

It belongs to the TFP11/STIP family. Identified in the spliceosome C complex. Found in the Intron Large (IL) complex, a post-mRNA release spliceosomal complex containing the excised intron, U2, U5 and U6 snRNPs, and splicing factors. Interacts with TUFT1. Interacts with DHX15; indicative for a recruitment of DHX15 to the IL complex. Interacts with GCFC2.

The protein localises to the cytoplasm. The protein resides in the nucleus. Functionally, involved in pre-mRNA splicing, specifically in spliceosome disassembly during late-stage splicing events. Intron turnover seems to proceed through reactions in two lariat-intron associated complexes termed Intron Large (IL) and Intron Small (IS). In cooperation with DHX15 seems to mediate the transition of the U2, U5 and U6 snRNP-containing IL complex to the snRNP-free IS complex leading to efficient debranching and turnover of excised introns. May play a role in the differentiation of ameloblasts and odontoblasts or in the forming of the enamel extracellular matrix. The protein is Tuftelin-interacting protein 11 (TFIP11) of Canis lupus familiaris (Dog).